The chain runs to 496 residues: Cytochrome P450 71D178 (496 aa).

A helical; Signal-anchor for type II membrane protein transmembrane segment spans residues 1–21; it reads MDISISWVVIILLVLSYLILM. Residue C435 coordinates heme.

It belongs to the cytochrome P450 family. It depends on heme as a cofactor. Expressed in flowers, leaves and stems, especially in glandular trichomes.

The protein resides in the membrane. It carries out the reaction (4S)-limonene + reduced [NADPH--hemoprotein reductase] + O2 = (1S,5R)-carveol + oxidized [NADPH--hemoprotein reductase] + H2O + H(+). The catalysed reaction is gamma-terpinene + 2 reduced [NADPH--hemoprotein reductase] + 2 O2 = carvacrol + 2 oxidized [NADPH--hemoprotein reductase] + 3 H2O + 2 H(+). The enzyme catalyses gamma-terpinene + 2 reduced [NADPH--hemoprotein reductase] + 2 O2 = thymol + 2 oxidized [NADPH--hemoprotein reductase] + 3 H2O + 2 H(+). It catalyses the reaction (4R)-limonene + reduced [NADPH--hemoprotein reductase] + O2 = (1R,6S)-isopiperitenol + oxidized [NADPH--hemoprotein reductase] + H2O + H(+). The protein operates within secondary metabolite biosynthesis; terpenoid biosynthesis. Involved in the biosynthesis of phenolic monoterpenes natural products thymol and carvacrol which have a broad range of biological activities acting as antimicrobial compounds, insecticides, antioxidants and pharmaceutical agents. Catalyzes the C2- and C3-hydroxylation of gamma-terpinene to produce carvacrol and thymol, respectively. Also mediates the C6-hydroxylation of (4S)-limonene to form carveol and the C3-hydroxylation of (4R)-limonene to generate (+)-trans-isopiperitenol. The chain is Cytochrome P450 71D178 from Origanum vulgare (Wild marjoram).